The primary structure comprises 492 residues: Propanoyl-CoA:succinate CoA transferase (492 aa).

260–264 (GVGNI) is a CoA binding site. Glutamate 286 functions as the 5-glutamyl coenzyme A thioester intermediate in the catalytic mechanism. CoA contacts are provided by asparagine 376 and glycine 380.

It belongs to the acetyl-CoA hydrolase/transferase family.

The catalysed reaction is propanoyl-CoA + succinate = propanoate + succinyl-CoA. Its function is as follows. Catalyzes the transfer of coenzyme A from propionyl-CoA to succinate. Could be part of a pathway that converts succinate to propionate. In Escherichia coli (strain K12), this protein is Propanoyl-CoA:succinate CoA transferase.